Here is a 943-residue protein sequence, read N- to C-terminus: MSNTTVEQFAAELKRPVEDLLKQLKEAGVSKNSGSDSLTLDDKQLLNAYLTKKNGSNGGTISIRRTKTEVSTVDGVKVETRKRGRTVNIPSAEELAAQVKAAQTQAAPVQPEQTAEDAVKARAEAAARAEARAKAEAEAAKLKAAKAGNKAKPAAQKPTEAKAETAPVAAETKPAEPKEKAVKPKHERNGKGKDAKKPAKPAAPAVPQPVVSAEEQAQRDEEARRAAALRAHQEALLKEKQERQARREAMKQQAEQQAKAAQEAKTGRQRPAKPAEKPQAAAPAVENKPVNPAKAKKEDRRNRDDEGQGRNAKGKGAKGGRDRNNARNGGDERVRGGKKGKKLKLEPNQHAFQAPTEPVVHEVLVPETITVADLAHKMAVKGVEMVKALMKKGMMVTINQSIDQDTALIVVKKLGHIGKPAAADDPEAFLGEGAEAEEAEALPRPPVVTVMGHVDHGKTSLLDYIRRAKVVQGEAGGITQHIGAYHVKTPRGVITFLDTPGHEAFTAMRARGAKATDIVILVVAADDGVMPQTIEAIAHAKAAGVPIVVAVNKIDKDTANPERIRQELTQHEVIPDDWGGTVQFIDVSAKKGTNIDALLEAVLLEAEVLELTAPVDAPAKGIIVEARLDKGRGAVATLLVQNGTLKKGDMLLAGTAFGKIRAMVDENGKSITEAGPSIPVEILGLSDVPNAGEDAMVLADEKKAREIALFRQGKYRDVRLAKQQAAKLENMFNNMGETQAQSLSVIIKADVQGSYEALAGSLKKLSADEVKVNVLHSGVGGITESDVNLAIASGAFIIGFNVRADASSRKLAENENVEIRYYNIIYDAIDDVKAAMSGMLSPEKKEQVTGTVEIRQVISVSKVGNIAGCMVTDGVVKRDSHIRLIRNNVVIHTGELASLKRYKDDVKEVRMGFECGLMLKGYNEIMEGDQLECFDIVEVARTL.

A compositionally biased stretch (low complexity) spans Val-99–Gln-113. The disordered stretch occupies residues Val-99–Ala-354. Over residues Asp-117–Lys-141 the composition is skewed to basic and acidic residues. Positions Ala-145–Thr-172 are enriched in low complexity. Residues Lys-173–Lys-197 are compositionally biased toward basic and acidic residues. Positions Lys-200 to Glu-215 are enriched in low complexity. A compositionally biased stretch (basic and acidic residues) spans Gln-216–Met-250. A compositionally biased stretch (low complexity) spans Lys-251–Ala-264. Basic and acidic residues-rich tracts occupy residues Ala-295–Gln-308 and Gly-319–Arg-335. Residues Pro-443–Thr-612 enclose the tr-type G domain. Positions Gly-452–Thr-459 are G1. Position 452–459 (Gly-452–Thr-459) interacts with GTP. The interval Gly-477–His-481 is G2. Positions Asp-498–Gly-501 are G3. GTP is bound by residues Asp-498–His-502 and Asn-552–Asp-555. The segment at Asn-552–Asp-555 is G4. Residues Ser-588–Lys-590 form a G5 region.

This sequence belongs to the TRAFAC class translation factor GTPase superfamily. Classic translation factor GTPase family. IF-2 subfamily.

Its subcellular location is the cytoplasm. One of the essential components for the initiation of protein synthesis. Protects formylmethionyl-tRNA from spontaneous hydrolysis and promotes its binding to the 30S ribosomal subunits. Also involved in the hydrolysis of GTP during the formation of the 70S ribosomal complex. The chain is Translation initiation factor IF-2 from Neisseria gonorrhoeae (strain ATCC 700825 / FA 1090).